The chain runs to 420 residues: Mannose-1-phosphate guanylyltransferase regulatory subunit alpha (420 aa).

The interval 2–251 (LKAVILIGGP…DGIWSQIKSA (250 aa)) is substrate-binding domain. GDP-alpha-D-mannose is bound by residues Glu85 and Gln247. Positions 273–420 (LAKHTPGGPR…SRSFTNQIIL (148 aa)) are hexapeptide repeat domain. The tract at residues 356–384 (TPNDPNPNDPRAHMDSESLFKDGKLLPAI) is C-loop.

Belongs to the transferase hexapeptide repeat family. Component of the GMPPA-GMPPB mannose-1-phosphate guanylyltransferase complex composed of 4 GMPPA subunits and 8 GMPPB subunits; the complex is organized into three layers, a central layer made up of 2 GMPPA dimers sandwiched between two layers each made up of 2 GMPPB dimers. In terms of tissue distribution, expressed in the liver (at protein level).

Its subcellular location is the cytoplasm. Regulatory subunit of the GMPPA-GMPPB mannose-1-phosphate guanylyltransferase complex; reduces the catalytic activity of GMPPB when part of the complex. Mediates allosteric feedback inhibition of GMPPB catalytic activity upon binding GDP-alpha-D-mannose. Together with GMPPB regulates GDP-alpha-D-mannose levels. This is Mannose-1-phosphate guanylyltransferase regulatory subunit alpha (GMPPA) from Sus scrofa (Pig).